The chain runs to 204 residues: MLKLTPRQAEILAFIKRCLEDNGYPPTRAEIAQELGFKSPNAAEEHLKALARKGAIEMTPGASRGIRIPGFEPGAANEDEGLPVIGRVAAGAPILAQQHVEESCQINPAFFHPKADYLLRVRGMSMKDIGIFDGDLLAVHTTREARNGQIVVARLDDEVTVKRFKREGNKVWLIAENPEFAPIEVDLEQQDLVIEGLSVGVIRR.

Residues 28–48 (RAEIAQELGFKSPNAAEEHLK) constitute a DNA-binding region (H-T-H motif). Residues serine 125 and lysine 162 each act as for autocatalytic cleavage activity in the active site.

It belongs to the peptidase S24 family. As to quaternary structure, homodimer.

The enzyme catalyses Hydrolysis of Ala-|-Gly bond in repressor LexA.. Its function is as follows. Represses a number of genes involved in the response to DNA damage (SOS response), including recA and lexA. In the presence of single-stranded DNA, RecA interacts with LexA causing an autocatalytic cleavage which disrupts the DNA-binding part of LexA, leading to derepression of the SOS regulon and eventually DNA repair. This Ectopseudomonas mendocina (strain ymp) (Pseudomonas mendocina) protein is LexA repressor.